A 615-amino-acid polypeptide reads, in one-letter code: Elongation factor 4 (615 aa).

The tr-type G domain maps to 14–200 (ARIRNFCIIA…KVVELIPAPT (187 aa)). GTP-binding positions include 26–31 (DHGKST) and 147–150 (NKID).

The protein belongs to the TRAFAC class translation factor GTPase superfamily. Classic translation factor GTPase family. LepA subfamily.

It localises to the cell membrane. It catalyses the reaction GTP + H2O = GDP + phosphate + H(+). In terms of biological role, required for accurate and efficient protein synthesis under certain stress conditions. May act as a fidelity factor of the translation reaction, by catalyzing a one-codon backward translocation of tRNAs on improperly translocated ribosomes. Back-translocation proceeds from a post-translocation (POST) complex to a pre-translocation (PRE) complex, thus giving elongation factor G a second chance to translocate the tRNAs correctly. Binds to ribosomes in a GTP-dependent manner. This Corynebacterium glutamicum (strain ATCC 13032 / DSM 20300 / JCM 1318 / BCRC 11384 / CCUG 27702 / LMG 3730 / NBRC 12168 / NCIMB 10025 / NRRL B-2784 / 534) protein is Elongation factor 4.